Consider the following 304-residue polypeptide: Ribosomal RNA small subunit methyltransferase H (304 aa).

Residues Gly47–His49, Asp66, Phe93, Asp108, and Gln115 each bind S-adenosyl-L-methionine.

It belongs to the methyltransferase superfamily. RsmH family.

The protein resides in the cytoplasm. The catalysed reaction is cytidine(1402) in 16S rRNA + S-adenosyl-L-methionine = N(4)-methylcytidine(1402) in 16S rRNA + S-adenosyl-L-homocysteine + H(+). Functionally, specifically methylates the N4 position of cytidine in position 1402 (C1402) of 16S rRNA. This Prochlorococcus marinus (strain NATL1A) protein is Ribosomal RNA small subunit methyltransferase H.